The primary structure comprises 86 residues: MKTLLLTLVVLTIACLDLGYTKTCFNDDLANPKTTELCRHSMYFCFKNSWIAGGVERIERGCSLTCPDIKYNGKYIYCCTRDNCNA.

The N-terminal stretch at 1–21 (MKTLLLTLVVLTIACLDLGYT) is a signal peptide. 4 disulfide bridges follow: Cys-24/Cys-45, Cys-38/Cys-62, Cys-66/Cys-78, and Cys-79/Cys-84.

It belongs to the three-finger toxin family. Short-chain subfamily. Orphan group IX sub-subfamily. In terms of tissue distribution, expressed by the venom gland.

It localises to the secreted. The chain is Candiduxin-1 from Bungarus candidus (Malayan krait).